A 277-amino-acid chain; its full sequence is Odontogenic ameloblast-associated protein (277 aa).

An N-terminal signal peptide occupies residues 1-15 (MRTLILLGILGATMS). The disordered stretch occupies residues 103–124 (TQAGQLDPSQPQTPQQTQRGPK). Residue threonine 115 is glycosylated (O-linked (GalNAc...) threonine). The interval 127-129 (MPS) is interaction with ARHGEF5. O-linked (GalNAc...) threonine glycosylation is found at threonine 208, threonine 248, and threonine 271.

It belongs to the ODAM family. In terms of assembly, interacts (via C-terminus) with ARHGEF5. Post-translationally, O-glycosylated.

The protein localises to the secreted. The protein resides in the cytoplasm. Its subcellular location is the nucleus. In terms of biological role, tooth-associated epithelia protein that probably plays a role in odontogenesis, the complex process that results in the initiation and generation of the tooth. May be incorporated in the enamel matrix at the end of mineralization process. Involved in the induction of RHOA activity via interaction with ARHGEF and expression of downstream factors such as ROCK. Plays a role in attachment of the junctional epithelium to the tooth surface. The chain is Odontogenic ameloblast-associated protein (ODAM) from Bos taurus (Bovine).